A 124-amino-acid chain; its full sequence is U13-hexatoxin-Mg1a (124 aa).

The N-terminal stretch at 1–17 (MKLSALVFVASVMLVAA) is a signal peptide. The propeptide occupies 18-52 (SPVKDVEEPVETHLAADLKTIEELAKYEEAAVQKR). Intrachain disulfides connect Cys54–Cys72, Cys65–Cys78, Cys69–Cys116, and Cys71–Cys87.

In terms of tissue distribution, expressed by the venom gland.

The protein resides in the secreted. No toxicity is observed upon intracranial injection into mice and intrathorax injection into crickets. This Macrothele gigas (Japanese funnel web spider) protein is U13-hexatoxin-Mg1a.